The chain runs to 299 residues: MEQHLDAYCMHLRSERQVSPHTLEAYRRDLSKVLAYCQKAQRSSWNDLDIQHLRSFTARQHQQGQSSRSLARMLSAVRGFYKYLNREGICQHDPANGLSPPKGERRLPKTLDTDRTAQLLDGGVEDDFLAHRDQAILELLYSSGLRLSELTGLNLDQLDLRDGLVQVLGKGSKTRVLPVGSKARQALEIWLPLRALTNPQDDAVFVSQQGKRLGPRTIQVRLKAAGERELGQNLHPHMLRHSFASHLLESSQDLRAVQELLGHADIKTTQIYTHLDFQHLATVYDSAHPRAKRKGAADD.

Residues 1–85 form the Core-binding (CB) domain; that stretch reads MEQHLDAYCM…AVRGFYKYLN (85 aa). Residues 106-285 enclose the Tyr recombinase domain; it reads RLPKTLDTDR…DFQHLATVYD (180 aa). Active-site residues include Arg-146, Lys-170, His-237, Arg-240, and His-263. Tyr-272 acts as the O-(3'-phospho-DNA)-tyrosine intermediate in catalysis.

This sequence belongs to the 'phage' integrase family. XerC subfamily. Forms a cyclic heterotetrameric complex composed of two molecules of XerC and two molecules of XerD.

It localises to the cytoplasm. Site-specific tyrosine recombinase, which acts by catalyzing the cutting and rejoining of the recombining DNA molecules. The XerC-XerD complex is essential to convert dimers of the bacterial chromosome into monomers to permit their segregation at cell division. It also contributes to the segregational stability of plasmids. The protein is Tyrosine recombinase XerC of Pseudomonas savastanoi pv. phaseolicola (strain 1448A / Race 6) (Pseudomonas syringae pv. phaseolicola (strain 1448A / Race 6)).